The following is a 198-amino-acid chain: Recombination protein RecR (198 aa).

The C4-type zinc-finger motif lies at 56–71; it reads CEICGNVSEQATCSIC. The 96-residue stretch at 79 to 174 folds into the Toprim domain; it reads ALICVVEEAK…RVTRLASGLP (96 aa).

Belongs to the RecR family.

In terms of biological role, may play a role in DNA repair. It seems to be involved in an RecBC-independent recombinational process of DNA repair. It may act with RecF and RecO. This Leifsonia xyli subsp. xyli (strain CTCB07) protein is Recombination protein RecR.